We begin with the raw amino-acid sequence, 339 residues long: Phosphatidylglycerol--prolipoprotein diacylglyceryl transferase (339 aa).

Helical transmembrane passes span 43–63 (FTIA…YWLG), 81–101 (ILWM…LTSW), and 121–141 (NGGI…IYFA). An a 1,2-diacyl-sn-glycero-3-phospho-(1'-sn-glycerol)-binding site is contributed by Arg167. Transmembrane regions (helical) follow at residues 231–251 (FTQL…YFWL) and 300–320 (LWTD…WMLW).

It belongs to the Lgt family.

It is found in the cell membrane. It catalyses the reaction L-cysteinyl-[prolipoprotein] + a 1,2-diacyl-sn-glycero-3-phospho-(1'-sn-glycerol) = an S-1,2-diacyl-sn-glyceryl-L-cysteinyl-[prolipoprotein] + sn-glycerol 1-phosphate + H(+). The protein operates within protein modification; lipoprotein biosynthesis (diacylglyceryl transfer). Functionally, catalyzes the transfer of the diacylglyceryl group from phosphatidylglycerol to the sulfhydryl group of the N-terminal cysteine of a prolipoprotein, the first step in the formation of mature lipoproteins. The polypeptide is Phosphatidylglycerol--prolipoprotein diacylglyceryl transferase (Deinococcus radiodurans (strain ATCC 13939 / DSM 20539 / JCM 16871 / CCUG 27074 / LMG 4051 / NBRC 15346 / NCIMB 9279 / VKM B-1422 / R1)).